The sequence spans 491 residues: UDP-N-acetylmuramate--L-alanine ligase (491 aa).

126-132 (GTHGKTT) contributes to the ATP binding site.

It belongs to the MurCDEF family.

It localises to the cytoplasm. The enzyme catalyses UDP-N-acetyl-alpha-D-muramate + L-alanine + ATP = UDP-N-acetyl-alpha-D-muramoyl-L-alanine + ADP + phosphate + H(+). It participates in cell wall biogenesis; peptidoglycan biosynthesis. Its function is as follows. Cell wall formation. The chain is UDP-N-acetylmuramate--L-alanine ligase from Escherichia coli (strain SE11).